The chain runs to 253 residues: Ubiquinone/menaquinone biosynthesis C-methyltransferase UbiE (253 aa).

Residues T76, D97, and 125-126 (NA) each bind S-adenosyl-L-methionine.

The protein belongs to the class I-like SAM-binding methyltransferase superfamily. MenG/UbiE family.

It catalyses the reaction a 2-demethylmenaquinol + S-adenosyl-L-methionine = a menaquinol + S-adenosyl-L-homocysteine + H(+). The enzyme catalyses a 2-methoxy-6-(all-trans-polyprenyl)benzene-1,4-diol + S-adenosyl-L-methionine = a 5-methoxy-2-methyl-3-(all-trans-polyprenyl)benzene-1,4-diol + S-adenosyl-L-homocysteine + H(+). The protein operates within quinol/quinone metabolism; menaquinone biosynthesis; menaquinol from 1,4-dihydroxy-2-naphthoate: step 2/2. It functions in the pathway cofactor biosynthesis; ubiquinone biosynthesis. Functionally, methyltransferase required for the conversion of demethylmenaquinol (DMKH2) to menaquinol (MKH2) and the conversion of 2-polyprenyl-6-methoxy-1,4-benzoquinol (DDMQH2) to 2-polyprenyl-3-methyl-6-methoxy-1,4-benzoquinol (DMQH2). This is Ubiquinone/menaquinone biosynthesis C-methyltransferase UbiE from Stenotrophomonas maltophilia (strain K279a).